Consider the following 263-residue polypeptide: HTH-type transcriptional repressor NanR (263 aa).

A disordered region spans residues M1–L22. The 69-residue stretch at K30 to P98 folds into the HTH gntR-type domain. The segment at residues E58 to A77 is a DNA-binding region (H-T-H motif).

The protein belongs to the NanR family.

Transcriptional repressor that controls expression of the genes required for the catabolism of sialic acids. The polypeptide is HTH-type transcriptional repressor NanR (Shigella sonnei (strain Ss046)).